The chain runs to 537 residues: MVHFIFVTGGVVSSLGKGLTAASLAMLLQAKGFRVSVRKLDPYLNIDPGTMNPHEHGEVYVTDDGAETDLDLGHYERFTGVSACKFDSITTGAIYSKLLKDERLGNYAGVTVQVIPHVTNIIKDFILSNTKGFDFIICEIGGTVGDIEGLPFFEAIRQIGNKLKSENCLFIHLTLLPYVKTARELKIKPTQHSVKALRAIGISPNILVCRAERNISKGEIDKISLLCNIESEYVVPAIDQKNIYLVPIAYHNSGLDNKVLKFFNINIMPSKLDKWHDIINRLKDSNSKVRIAIIAKYHKLKDAYKSVIEALDHAGIYYKYKIDLVWINAENLTEENINKKLLDIDGILVPGGFGERATKGTIIAIKYARTNNIPFFGICFGMQLATIEIAQNLIGIKDAVTEEFKVDGTKIIEKINKNCEDSKITIENVKKTMRLGSYPCSLVASTIAANAYKSLEINERHRHRYKFNNEFQNIFEKHGIVFSGFSKDEEIVEIIELPLLRWFVGVQFHPEFKSKPFEAHPLFIQFIKAAIEYNKCN.

The amidoligase domain stretch occupies residues 1-265 (MVHFIFVTGG…DNKVLKFFNI (265 aa)). S13 provides a ligand contact to CTP. S13 contributes to the UTP binding site. Residues 14-19 (SLGKGL) and D71 contribute to the ATP site. Mg(2+) contacts are provided by D71 and E139. CTP contacts are provided by residues 146–148 (DIE) and K222. K222 lines the UTP pocket. Positions 290-536 (RIAIIAKYHK…IKAAIEYNKC (247 aa)) constitute a Glutamine amidotransferase type-1 domain. G352 lines the L-glutamine pocket. The active-site Nucleophile; for glutamine hydrolysis is C379. L-glutamine-binding positions include 380 to 383 (FGMQ), E403, and R464. Active-site residues include H509 and E511.

Belongs to the CTP synthase family. Homotetramer.

It catalyses the reaction UTP + L-glutamine + ATP + H2O = CTP + L-glutamate + ADP + phosphate + 2 H(+). It carries out the reaction L-glutamine + H2O = L-glutamate + NH4(+). The catalysed reaction is UTP + NH4(+) + ATP = CTP + ADP + phosphate + 2 H(+). It participates in pyrimidine metabolism; CTP biosynthesis via de novo pathway; CTP from UDP: step 2/2. Allosterically activated by GTP, when glutamine is the substrate; GTP has no effect on the reaction when ammonia is the substrate. The allosteric effector GTP functions by stabilizing the protein conformation that binds the tetrahedral intermediate(s) formed during glutamine hydrolysis. Inhibited by the product CTP, via allosteric rather than competitive inhibition. Catalyzes the ATP-dependent amination of UTP to CTP with either L-glutamine or ammonia as the source of nitrogen. Regulates intracellular CTP levels through interactions with the four ribonucleotide triphosphates. This is CTP synthase from Rickettsia conorii (strain ATCC VR-613 / Malish 7).